The sequence spans 95 residues: MTLNVDEEVERLKEEIKRLAQPRPDGSYVVKFGVLFSDDRCANIFEALVGTLRAAKKRKVVTYDGELLLQGVHDNVEIVLLKPPTQATQAEGVGA.

The protein belongs to the costars family.

This is Costars family protein WS02710_H03 from Picea sitchensis (Sitka spruce).